The following is a 792-amino-acid chain: Phenylalanine--tRNA ligase beta subunit (792 aa).

The tRNA-binding domain maps to 39–150; the sequence is GDEITNVVTG…ENTPIGKDIK (112 aa). One can recognise a B5 domain in the interval 404-479; it reads SEPNIVEVDY…RIYGYNKVPS (76 aa). Mg(2+) contacts are provided by Asp-457, Asp-463, Glu-466, and Glu-467. The FDX-ACB domain occupies 699–792; sequence PKFPTVTRDI…LEHVLGAELR (94 aa).

This sequence belongs to the phenylalanyl-tRNA synthetase beta subunit family. Type 1 subfamily. As to quaternary structure, tetramer of two alpha and two beta subunits. Requires Mg(2+) as cofactor.

It is found in the cytoplasm. It catalyses the reaction tRNA(Phe) + L-phenylalanine + ATP = L-phenylalanyl-tRNA(Phe) + AMP + diphosphate + H(+). The sequence is that of Phenylalanine--tRNA ligase beta subunit from Clostridium acetobutylicum (strain ATCC 824 / DSM 792 / JCM 1419 / IAM 19013 / LMG 5710 / NBRC 13948 / NRRL B-527 / VKM B-1787 / 2291 / W).